The following is a 618-amino-acid chain: Sodium/iodide cotransporter (618 aa).

Topologically, residues 1–14 (MEGAEAGARATFGP) are extracellular. Residues 15–31 (WDYGVFATMLLVSTGIG) form a helical membrane-spanning segment. Over 32–56 (LWVGLARGGQRSADDFFTGGRQLAA) the chain is Cytoplasmic. A discontinuously helical transmembrane segment spans residues 57–80 (VPVGLSLAASFMSAVQVLGVPAEA). 3 residues coordinate Na(+): S69, V71, and Q72. An iodide-binding site is contributed by V76. Residues 81–84 (ARYG) lie on the Extracellular side of the membrane. The chain crosses the membrane as a helical span at residues 85 to 105 (LKFLWMCVGQLLNSLLTALLF). M90 is an iodide binding site. Topologically, residues 106-130 (LPIFYRLGLTSTYQYLELRFSRAVR) are cytoplasmic. A helical transmembrane segment spans residues 131-157 (LCGTLQYLVATMLYTGIVIYAPALILN). Position 144 (Y144) interacts with Na(+). Over 158–163 (QVTGLD) the chain is Extracellular. The helical transmembrane segment at 164 to 181 (IWASLLSTGIICTLYTTV) threads the bilayer. Topologically, residues 182-189 (GGMKAVVW) are cytoplasmic. Residues 190–208 (TDVFQVVVMLVGFWVILAR) form a helical membrane-spanning segment. The Extracellular segment spans residues 209–243 (GVMLMGGPWNVLSLAQNHSRINLMDFDPDPRSRYT). A discontinuously helical membrane pass occupies residues 244 to 266 (FWTFVVGGSLVWLSMYGVNQAQV). W255 serves as a coordination point for iodide. M258 serves as a coordination point for Na(+). The Cytoplasmic portion of the chain corresponds to 267-278 (QRYVACHTERKA). A helical transmembrane segment spans residues 279-301 (KLALLVNQLGLFLIVASAACCGI). At 302–335 (VMFVYYKDCDPLLTGRIAAPDQYMPLLVLDIFED) the chain is on the extracellular side. Residues 336 to 363 (LPGVPGLFLACAYSGTLSTASTSINAMA) traverse the membrane as a helical segment. The Cytoplasmic segment spans residues 364-386 (AVTVEDLIKPRMPSLAPRKLVFI). The chain crosses the membrane as a helical span at residues 387 to 408 (SKGLSFIYGSTCLTVAALSSLL). The Extracellular segment spans residues 409–411 (GGG). The chain crosses the membrane as a helical span at residues 412–437 (VLQGSFTVMGVISGPLLGAFTLGMLL). L413 lines the iodide pocket. 2 residues coordinate Na(+): S416 and F417. F417 is an iodide binding site. The Cytoplasmic segment spans residues 438–441 (PACN). Residues 442–465 (TPGVLSGLTAGLAVSLWVAVGATL) form a helical membrane-spanning segment. The Extracellular segment spans residues 466–520 (YPPGEQTMGVLPTSAAGCTNASVLPSPPGAANTSRGIPSSGMDSGRPAFADTFYA). N-linked (GlcNAc...) asparagine glycans are attached at residues N485 and N497. The chain crosses the membrane as a helical span at residues 521 to 545 (VSYLYYGALGTLTTMLCGALISYLT). At 546–618 (GPTKRSSLGP…YLGHDVETNL (73 aa)) the chain is on the cytoplasmic side. Position 551 is a phosphoserine; by PKA (S551). A compositionally biased stretch (basic and acidic residues) spans 571 to 587 (PKEDTTTLEDSLVKGPE). The tract at residues 571–618 (PKEDTTTLEDSLVKGPEDIPAATKKPPGFRPEAETHPLYLGHDVETNL) is disordered.

It belongs to the sodium:solute symporter (SSF) (TC 2.A.21) family. In terms of assembly, monomer. In terms of processing, glycosylated.

The protein resides in the cell membrane. Its subcellular location is the cytoplasm. The catalysed reaction is iodide(out) + 2 Na(+)(out) = iodide(in) + 2 Na(+)(in). It catalyses the reaction chlorate(out) + 2 Na(+)(out) = chlorate(in) + 2 Na(+)(in). It carries out the reaction thiocyanate(out) + 2 Na(+)(out) = thiocyanate(in) + 2 Na(+)(in). The enzyme catalyses nitrate(out) + 2 Na(+)(out) = nitrate(in) + 2 Na(+)(in). The catalysed reaction is selenocyanate(out) + 2 Na(+)(out) = selenocyanate(in) + 2 Na(+)(in). With respect to regulation, perchlorate inhibits iodide transport activity. Oxyanions inhibit iodide transport activity by blocking the binding sites for iodide and one of the sodium ions. Its function is as follows. Sodium:iodide symporter that mediates the transport of iodide into the thyroid gland. Can also mediate the transport of chlorate, thiocynate, nitrate and selenocynate. This is Sodium/iodide cotransporter (Slc5a5) from Mus musculus (Mouse).